Reading from the N-terminus, the 714-residue chain is Sodium-dependent acetylcholine transporter (714 aa).

Residues 1 to 21 (MSVSSNDPEQRNGRGMASGNN) are disordered. Residues 1-74 (MSVSSNDPEQ…GNWSNKSDYL (74 aa)) lie on the Cytoplasmic side of the membrane. Helical transmembrane passes span 75–95 (LAVIGFTAGVGSFWKFPFLVF), 100–120 (AAFLVPYLCMLCLASLPMFFM), and 152–172 (ISGFFAVFFNIISAWTLFYLI). At 173-257 (NSFSFSIPWS…LSKGVDDFGT (85 aa)) the chain is on the extracellular side. Residues Asn192, Asn205, Asn211, and Asn222 are each glycosylated (N-linked (GlcNAc...) asparagine). 9 helical membrane passes run 258–278 (LNWYLGLCVLACWIAVFLCLF), 287–307 (VVYVAVIVPFIILTVLLTRLL), 336–356 (AAVQAFYSVSCCSGGLFTIAS), 368–388 (IWLVLIVDVIVSLVGCLLTFS), 422–442 (AGVSVAPLYAGLFFIMILLVV), 476–496 (VCALFILLSIPFCLSSGLFWM), 502–522 (FVLTWPLVVIAFLECMAINWV), 548–568 (ILFKFICPMVYLAILCFLWLD), and 584–604 (ILTAWCIASFPLILIPIVGIW). Over 605 to 714 (QFCIAKGTIT…IPKFERETAI (110 aa)) the chain is Cytoplasmic.

It belongs to the sodium:neurotransmitter symporter (SNF) (TC 2.A.22) family. In terms of assembly, interacts with stn-1; part of the DGC. In terms of tissue distribution, body wall, and vulval and enteric muscles.

It is found in the cell membrane. The protein localises to the postsynaptic cell membrane. Its function is as follows. Mediates sodium-dependent uptake of acetylcholine at neuromuscular junctions during periods of increased synaptic activity, may also prevent spillover to adjacent synaptic sites. Not involved in the uptake of other neurotransmitters (GABA, glycine, proline and glutamate) and there was also no inhibition of uptake by adding an excess of other candidate substrates (GABA, glycine, taurine, creatine, proline, alanine, carnitine, glutamate and betaine). Required for muscle integrity; altered transport of acetylcholine due to loss of dystrophin-glycoprotein complex (DGC) function results in muscle degeneration. The polypeptide is Sodium-dependent acetylcholine transporter (Caenorhabditis elegans).